A 500-amino-acid chain; its full sequence is Pentatricopeptide repeat-containing protein At1g06580 (500 aa).

12 PPR repeats span residues 78–112 (SIVD…GISH), 113–147 (DLYS…GFEP), 148–182 (SIVT…GYEP), 183–217 (NVVI…GIRP), 218–252 (DVVT…GISP), 253–287 (DVIT…SVNP), 288–322 (NIVT…GFFP), 323–357 (NAVT…GVDG), 358–392 (DTFT…GVHP), 393–427 (DMYT…KTVV), 428–462 (GIIT…GVSP), and 463–498 (DVIT…GLMP).

This sequence belongs to the PPR family. P subfamily.

In Arabidopsis thaliana (Mouse-ear cress), this protein is Pentatricopeptide repeat-containing protein At1g06580.